The following is a 636-amino-acid chain: Capsid vertex component 2 (636 aa).

The segment at 1 to 48 (MSLLHTFWRLPVAVFFEPHEENVLRCPERVLRRLLEDAAVAMRGGGWR) is interaction with major capsid protein/MCP. Positions 97-125 (DEGPSPRTLLQPPCRPRSSSPGTGVAGAS) are disordered.

It belongs to the herpesviridae CVC2 protein family. In terms of assembly, heterodimerizes with CVC1. Interacts with major capsid protein/MCP and triplex capsid protein 1/TRX1 at the pentamer vertices. Interacts with the large tegument protein/LTP.

It is found in the virion. The protein resides in the host nucleus. Capsid vertex-specific component that plays a role during viral DNA encapsidation, assuring correct genome cleavage and presumably stabilizing capsids that contain full-length viral genomes. Participates in the interaction between the capsid and the tegument through interaction with the large tegument protein/LTP. The sequence is that of Capsid vertex component 2 from Homo sapiens (Human).